A 344-amino-acid chain; its full sequence is HTH-type transcriptional regulator XC_2801 (344 aa).

Residues His-3 to Thr-60 form the HTH lysR-type domain. Residues Phe-20–Gln-39 constitute a DNA-binding region (H-T-H motif).

The protein belongs to the LysR transcriptional regulatory family. Interacts with the cyclic di-GMP effector XC_3703.

With respect to regulation, activity is regulated by cyclic di-GMP. Cyclic di-GMP specifically binds to XC_3703, which inhibits the interaction of the XC_2801-XC_3703 complex with DNA and prevents the transcription of the target genes. In terms of biological role, transcriptional regulator that directly or indirectly regulates the expression of virulence-related genes, including flhB, aaeA, fliL and flgG. Binds to the promoter of the target genes only in the presence of XC_3703. This Xanthomonas campestris pv. campestris (strain 8004) protein is HTH-type transcriptional regulator XC_2801.